The primary structure comprises 778 residues: Molybdenum cofactor sulfurase (778 aa).

Residue Lys235 is modified to N6-(pyridoxal phosphate)lysine. Cys399 is an active-site residue. 2 disordered regions span residues 576 to 596 (LSKN…SRVC) and 654 to 673 (ARPA…DTEK). Residues 584–594 (RSSSSRSRSSR) show a composition bias toward low complexity. The 128-residue stretch at 651-778 (LPTARPALPG…ETAERARSRL (128 aa)) folds into the MOSC domain.

The protein belongs to the class-V pyridoxal-phosphate-dependent aminotransferase family. MOCOS subfamily. The cofactor is pyridoxal 5'-phosphate.

The catalysed reaction is Mo-molybdopterin + L-cysteine + AH2 = thio-Mo-molybdopterin + L-alanine + A + H2O. It participates in cofactor biosynthesis; molybdopterin biosynthesis. Sulfurates the molybdenum cofactor. Sulfation of molybdenum is essential for xanthine dehydrogenase (XDH) and aldehyde oxidase (ADO) enzymes in which molybdenum cofactor is liganded by 1 oxygen and 1 sulfur atom in active form. The polypeptide is Molybdenum cofactor sulfurase (Chaetomium globosum (strain ATCC 6205 / CBS 148.51 / DSM 1962 / NBRC 6347 / NRRL 1970) (Soil fungus)).